The sequence spans 422 residues: MLDARYLRENLETVEARLKTRGAGVDLERFRQLDGSRRELLQQTETLKALRNKVSDEISRIKDKSQAQDRIIEMREVSQRIKGLDEELKGVEEALEYFLLTVPNIPCAATPVGASEVDNVEVKKWGEKPVFDFAPKPHWEIGESLDILDFERGAKLAGARFTLYKGFGARLERALINFMLDLHTERHKYLEMLPPFMVNRESMTGTGQLPKFEEDLFHMEGVDYFLIPTAEVPVTNIHRGEILKAADLPLCYTAYTPCFRKEAGSYGKDTRGLIRQHQFNKVELVKFVHPAHSYNELDKLLDNAEEVLRLLGLPYRVVDLCTADIGFSAARTYDIEVWLPGQDCYREISSCSNFEDFQARRASIRFREDEKAKPEFVHTLNGSGLAVGRTLVAILENYQEADGSVSIPGALRPYMGGIEKIA.

229-231 (TAE) contributes to the L-serine binding site. 260 to 262 (RKE) contributes to the ATP binding site. Glutamate 283 lines the L-serine pocket. Residue 347-350 (EISS) coordinates ATP. Position 383 (serine 383) interacts with L-serine.

The protein belongs to the class-II aminoacyl-tRNA synthetase family. Type-1 seryl-tRNA synthetase subfamily. As to quaternary structure, homodimer. The tRNA molecule binds across the dimer.

The protein localises to the cytoplasm. The enzyme catalyses tRNA(Ser) + L-serine + ATP = L-seryl-tRNA(Ser) + AMP + diphosphate + H(+). The catalysed reaction is tRNA(Sec) + L-serine + ATP = L-seryl-tRNA(Sec) + AMP + diphosphate + H(+). It functions in the pathway aminoacyl-tRNA biosynthesis; selenocysteinyl-tRNA(Sec) biosynthesis; L-seryl-tRNA(Sec) from L-serine and tRNA(Sec): step 1/1. Catalyzes the attachment of serine to tRNA(Ser). Is also able to aminoacylate tRNA(Sec) with serine, to form the misacylated tRNA L-seryl-tRNA(Sec), which will be further converted into selenocysteinyl-tRNA(Sec). This chain is Serine--tRNA ligase, found in Geotalea uraniireducens (strain Rf4) (Geobacter uraniireducens).